The following is a 393-amino-acid chain: Phosphoglycerate kinase (393 aa).

Residues 21–23 (DFN), Arg36, 59–62 (HLGR), Arg118, and Arg151 contribute to the substrate site. ATP-binding positions include Lys201, Glu323, and 349–352 (GGDS).

This sequence belongs to the phosphoglycerate kinase family. In terms of assembly, monomer.

It is found in the cytoplasm. It catalyses the reaction (2R)-3-phosphoglycerate + ATP = (2R)-3-phospho-glyceroyl phosphate + ADP. Its pathway is carbohydrate degradation; glycolysis; pyruvate from D-glyceraldehyde 3-phosphate: step 2/5. In Moorella thermoacetica (strain ATCC 39073 / JCM 9320), this protein is Phosphoglycerate kinase.